A 90-amino-acid chain; its full sequence is MQSTSLFLEGINLLTLGMGFVFIFLIFLVYATRAMSQLIVRFAPPEVPAKTTNKKASANKAKANPNQNQGELLAVLTAAVHHHKTQQKLS.

The helical transmembrane segment at 10–32 (GINLLTLGMGFVFIFLIFLVYAT) threads the bilayer.

The protein belongs to the OadG family. Heterotrimer of an alpha, a beta and a gamma subunit. Requires Na(+) as cofactor.

The protein resides in the cell membrane. It carries out the reaction oxaloacetate + 2 Na(+)(in) + H(+) = pyruvate + 2 Na(+)(out) + CO2. Catalyzes the decarboxylation of oxaloacetate coupled to Na(+) translocation. The chain is Probable oxaloacetate decarboxylase gamma chain 2 (oadG2) from Vibrio cholerae serotype O1 (strain ATCC 39315 / El Tor Inaba N16961).